The primary structure comprises 493 residues: MQRLKHGLLQAAGWLFYLSLLMGLAAALPTSIFDSQSKNFIFLIGAVGIWRYSMGITHFVRGMIFLYIVYPHLRRKVRKLGSAADPSHVFLMVTSFRIDALTTAQVYSSVIREAIECGLPTTVVCSLVEMSDELLVKSMWAKANPPDRVKLDFVRIPGTGKRDGLAYGFRAISRHMPDDRAVVAVIDGDTVLNEGVVAKTVPWFQLFDNVGGLTTNEFCEVRGGYIMSEWHKLRFAQRHINMCSMALSKRVLTMTGRMSVFRAKVVTDPEFIADVESDSLNHWRLGTFRFLTGDDKSSWFSLMRLGYDTFYVPDAAINTVEHPPEKSFLKASRKLMYRWYGNNLRQNSRALGLGVRRLGIFTSIVLFDQRVSMWTSILGLTVAIIASFKYGGAFLLMYLLWIGMTRLILTLLLSLSGHRIGPAYPMILYYNQIVGALMKIYVFFRLDRQSWTRQDTKLSRDMASFQGWFNTWSSRTMTFSAGTIFVAVLLTMV.

4 helical membrane passes run glycine 13–isoleucine 32, valine 47–valine 69, leucine 380–isoleucine 402, and proline 422–phenylalanine 444.

This sequence belongs to the glycosyltransferase 2 family.

The protein localises to the cell membrane. Its pathway is glycan biosynthesis; alginate biosynthesis. Functionally, possibly a processive enzyme that polymerizes GDP-mannuronic acid. This chain is Glycosyltransferase alg8 (alg8), found in Pseudomonas syringae pv. tomato (strain ATCC BAA-871 / DC3000).